Reading from the N-terminus, the 153-residue chain is Endoribonuclease YbeY (153 aa).

Zn(2+) is bound by residues His116, His120, and His126.

The protein belongs to the endoribonuclease YbeY family. Zn(2+) serves as cofactor.

It localises to the cytoplasm. Its function is as follows. Single strand-specific metallo-endoribonuclease involved in late-stage 70S ribosome quality control and in maturation of the 3' terminus of the 16S rRNA. The protein is Endoribonuclease YbeY of Clavibacter sepedonicus (Clavibacter michiganensis subsp. sepedonicus).